A 378-amino-acid polypeptide reads, in one-letter code: Erythronate-4-phosphate dehydrogenase (378 aa).

2 residues coordinate substrate: S45 and T66. NAD(+) is bound by residues D146 and T175. Residue R208 is part of the active site. An NAD(+)-binding site is contributed by D232. E237 is an active-site residue. Catalysis depends on H254, which acts as the Proton donor. An NAD(+)-binding site is contributed by G257. Y258 lines the substrate pocket.

The protein belongs to the D-isomer specific 2-hydroxyacid dehydrogenase family. PdxB subfamily. In terms of assembly, homodimer.

The protein localises to the cytoplasm. It carries out the reaction 4-phospho-D-erythronate + NAD(+) = (R)-3-hydroxy-2-oxo-4-phosphooxybutanoate + NADH + H(+). Its pathway is cofactor biosynthesis; pyridoxine 5'-phosphate biosynthesis; pyridoxine 5'-phosphate from D-erythrose 4-phosphate: step 2/5. Catalyzes the oxidation of erythronate-4-phosphate to 3-hydroxy-2-oxo-4-phosphonooxybutanoate. The protein is Erythronate-4-phosphate dehydrogenase of Escherichia coli O17:K52:H18 (strain UMN026 / ExPEC).